A 367-amino-acid chain; its full sequence is Protein TlpB (367 aa).

5 helical membrane-spanning segments follow: residues 15-35 (ILIS…SPYF), 53-73 (IIAP…GILI), 83-103 (IIPI…YVTF), 124-144 (IQAI…FFLL), and 153-173 (FYVV…LAPI).

The protein resides in the membrane. The protein is Protein TlpB (tlpB) of Flavobacterium psychrophilum.